A 103-amino-acid chain; its full sequence is UPF0145 protein Dred_2155 (103 aa).

This sequence belongs to the UPF0145 family.

In Desulforamulus reducens (strain ATCC BAA-1160 / DSM 100696 / MI-1) (Desulfotomaculum reducens), this protein is UPF0145 protein Dred_2155.